The chain runs to 178 residues: Interleukin-1 receptor antagonist protein (178 aa).

An N-terminal signal peptide occupies residues 1–26; sequence MEICRGPYSHLISLLLILLFRSESAG. C92 and C142 form a disulfide bridge. N110 carries N-linked (GlcNAc...) asparagine glycosylation.

It belongs to the IL-1 family.

The protein resides in the secreted. Its function is as follows. Anti-inflammatory antagonist of interleukin-1 family of proinflammatory cytokines such as interleukin-1beta/IL1B and interleukin-1alpha/IL1A. Protects from immune dysregulation and uncontrolled systemic inflammation triggered by IL1 for a range of innate stimulatory agents such as pathogens. In Rattus norvegicus (Rat), this protein is Interleukin-1 receptor antagonist protein (Il1rn).